We begin with the raw amino-acid sequence, 236 residues long: Ribonuclease 3 (236 aa).

The RNase III domain maps to 13–138; the sequence is TEKVFKISGY…LIGAIYVDGG (126 aa). E51 lines the Mg(2+) pocket. D55 is an active-site residue. The Mg(2+) site is built by N124 and E127. Residue E127 is part of the active site. Residues 164–232 enclose the DRBM domain; the sequence is DAKTALQEWA…AKLMLEKVTK (69 aa).

The protein belongs to the ribonuclease III family. Homodimer. Requires Mg(2+) as cofactor.

The protein resides in the cytoplasm. The enzyme catalyses Endonucleolytic cleavage to 5'-phosphomonoester.. Its function is as follows. Digests double-stranded RNA. Involved in the processing of primary rRNA transcript to yield the immediate precursors to the large and small rRNAs (23S and 16S). Processes some mRNAs, and tRNAs when they are encoded in the rRNA operon. Processes pre-crRNA and tracrRNA of type II CRISPR loci if present in the organism. The chain is Ribonuclease 3 from Anaplasma phagocytophilum (strain HZ).